An 88-amino-acid polypeptide reads, in one-letter code: Mitochondrial import inner membrane translocase subunit tim9 (88 aa).

A Twin CX3C motif motif is present at residues 35–59; sequence CFTACVDDFTSKALSGRESGCISRC. Intrachain disulfides connect cysteine 35–cysteine 59 and cysteine 39–cysteine 55.

Belongs to the small Tim family. Heterohexamer; composed of 3 copies of tim9 and 3 copies of tim10, named soluble 70 kDa complex. Associates with the tim22 complex, whose core is composed of tim22 and tim54. Interacts with the transmembrane regions of multi-pass transmembrane proteins in transit.

Its subcellular location is the mitochondrion inner membrane. Mitochondrial intermembrane chaperone that participates in the import and insertion of multi-pass transmembrane proteins into the mitochondrial inner membrane. Also required for the transfer of beta-barrel precursors from the TOM complex to the sorting and assembly machinery (SAM complex) of the outer membrane. Acts as a chaperone-like protein that protects the hydrophobic precursors from aggregation and guide them through the mitochondrial intermembrane space. The sequence is that of Mitochondrial import inner membrane translocase subunit tim9 (tim9) from Neurospora crassa (strain ATCC 24698 / 74-OR23-1A / CBS 708.71 / DSM 1257 / FGSC 987).